We begin with the raw amino-acid sequence, 450 residues long: Methylenetetrahydrofolate--tRNA-(uracil-5-)-methyltransferase TrmFO (450 aa).

10–15 contacts FAD; sequence GGGLAG.

The protein belongs to the MnmG family. TrmFO subfamily. It depends on FAD as a cofactor.

It localises to the cytoplasm. It catalyses the reaction uridine(54) in tRNA + (6R)-5,10-methylene-5,6,7,8-tetrahydrofolate + NADH + H(+) = 5-methyluridine(54) in tRNA + (6S)-5,6,7,8-tetrahydrofolate + NAD(+). It carries out the reaction uridine(54) in tRNA + (6R)-5,10-methylene-5,6,7,8-tetrahydrofolate + NADPH + H(+) = 5-methyluridine(54) in tRNA + (6S)-5,6,7,8-tetrahydrofolate + NADP(+). Functionally, catalyzes the folate-dependent formation of 5-methyl-uridine at position 54 (M-5-U54) in all tRNAs. The sequence is that of Methylenetetrahydrofolate--tRNA-(uracil-5-)-methyltransferase TrmFO from Anaeromyxobacter dehalogenans (strain 2CP-C).